The chain runs to 371 residues: Nuclear hormone receptor family member nhr-51 (371 aa).

Residues 2 to 77 (NKNCLICHRK…MGMQAFPRRV (76 aa)) constitute a DNA-binding region (nuclear receptor). NR C4-type zinc fingers lie at residues 5 to 25 (CLICHRKAAGQHYGVLSCFAC) and 41 to 60 (CQKFNKCYEKFIILPKCKAC). The 240-residue stretch at 98–337 (MDEQRHWRML…KQLVTDTFVD (240 aa)) folds into the NR LBD domain.

Belongs to the nuclear hormone receptor family.

The protein resides in the nucleus. In terms of biological role, orphan nuclear receptor. The sequence is that of Nuclear hormone receptor family member nhr-51 (nhr-51) from Caenorhabditis elegans.